The following is a 58-amino-acid chain: UPF0391 membrane protein Sbal_1421 (58 aa).

The next 2 membrane-spanning stretches (helical) occupy residues 6-26 (LVFLVVAVIAGLLGFTGIAGA) and 28-48 (AGIAKIIFLIFIVLLVISLLV).

The protein belongs to the UPF0391 family.

It is found in the cell membrane. The sequence is that of UPF0391 membrane protein Sbal_1421 from Shewanella baltica (strain OS155 / ATCC BAA-1091).